Here is a 729-residue protein sequence, read N- to C-terminus: Fatty acid oxidation complex subunit alpha (729 aa).

The tract at residues 1–189 (MLYKGDTLYL…KIGLVDGVVK (189 aa)) is enoyl-CoA hydratase/isomerase. Position 296 (aspartate 296) interacts with substrate. The interval 311–729 (ETPKQAAVLG…ARPVGDLKTA (419 aa)) is 3-hydroxyacyl-CoA dehydrogenase. Residues methionine 324, aspartate 343, 400–402 (VVE), lysine 407, and serine 429 each bind NAD(+). Histidine 450 acts as the For 3-hydroxyacyl-CoA dehydrogenase activity in catalysis. Asparagine 453 serves as a coordination point for NAD(+). The substrate site is built by asparagine 500 and tyrosine 660. The disordered stretch occupies residues 708-729 (RHNEPYYPPVEPARPVGDLKTA).

The protein in the N-terminal section; belongs to the enoyl-CoA hydratase/isomerase family. It in the C-terminal section; belongs to the 3-hydroxyacyl-CoA dehydrogenase family. In terms of assembly, heterotetramer of two alpha chains (FadB) and two beta chains (FadA).

It carries out the reaction a (3S)-3-hydroxyacyl-CoA + NAD(+) = a 3-oxoacyl-CoA + NADH + H(+). The catalysed reaction is a (3S)-3-hydroxyacyl-CoA = a (2E)-enoyl-CoA + H2O. The enzyme catalyses a 4-saturated-(3S)-3-hydroxyacyl-CoA = a (3E)-enoyl-CoA + H2O. It catalyses the reaction (3S)-3-hydroxybutanoyl-CoA = (3R)-3-hydroxybutanoyl-CoA. It carries out the reaction a (3Z)-enoyl-CoA = a 4-saturated (2E)-enoyl-CoA. The catalysed reaction is a (3E)-enoyl-CoA = a 4-saturated (2E)-enoyl-CoA. It functions in the pathway lipid metabolism; fatty acid beta-oxidation. Functionally, involved in the aerobic and anaerobic degradation of long-chain fatty acids via beta-oxidation cycle. Catalyzes the formation of 3-oxoacyl-CoA from enoyl-CoA via L-3-hydroxyacyl-CoA. It can also use D-3-hydroxyacyl-CoA and cis-3-enoyl-CoA as substrate. The protein is Fatty acid oxidation complex subunit alpha of Escherichia coli (strain K12 / MC4100 / BW2952).